The sequence spans 180 residues: Protein GrpE (180 aa).

Residues 1–19 (MAEKKRAQEQEKVQEDQKM) show a composition bias toward basic and acidic residues. Residues 1 to 25 (MAEKKRAQEQEKVQEDQKMQNEQNE) are disordered.

The protein belongs to the GrpE family. In terms of assembly, homodimer.

It is found in the cytoplasm. Its function is as follows. Participates actively in the response to hyperosmotic and heat shock by preventing the aggregation of stress-denatured proteins, in association with DnaK and GrpE. It is the nucleotide exchange factor for DnaK and may function as a thermosensor. Unfolded proteins bind initially to DnaJ; upon interaction with the DnaJ-bound protein, DnaK hydrolyzes its bound ATP, resulting in the formation of a stable complex. GrpE releases ADP from DnaK; ATP binding to DnaK triggers the release of the substrate protein, thus completing the reaction cycle. Several rounds of ATP-dependent interactions between DnaJ, DnaK and GrpE are required for fully efficient folding. This chain is Protein GrpE, found in Nitratiruptor sp. (strain SB155-2).